A 199-amino-acid chain; its full sequence is COMM domain-containing protein 2 (199 aa).

One can recognise a COMM domain in the interval 123–190 (SYHNLEWRLD…QALEEMKTNH (68 aa)).

This sequence belongs to the COMM domain-containing protein 2 family. As to quaternary structure, component of the commander complex consisting of the CCC subcomplex and the retriever subcomplex. Component of the CCC (COMMD/CCDC22/CCDC93) subcomplex consisting of COMMD1, COMMD2, COMMD3, COMMD4, COMMD5, COMMD6, COMMD7, COMMD8, COMMD9, COMMD10, CCDC22 and CCDC93; within the complex forms a heterodimer with COMMD3. Interacts with RELA, RELB, NFKB1/p105, NFKB2/p100. Interacts with CCDC22, CCDC93, SCNN1B, CUL3, CUL4B, CUL5, CUL7. As to expression, ubiquitous.

It is found in the cytoplasm. Scaffold protein in the commander complex that is essential for endosomal recycling of transmembrane cargos; the commander complex is composed of the CCC subcomplex and the retriever subcomplex. May modulate activity of cullin-RING E3 ubiquitin ligase (CRL) complexes. May down-regulate activation of NF-kappa-B. The protein is COMM domain-containing protein 2 (COMMD2) of Homo sapiens (Human).